Here is a 363-residue protein sequence, read N- to C-terminus: MSKNYHIAVLPGDGIGPEVMAQALKVMDAVRSRFDMRITTSHYDVGGIAIDNHGHPLPKATVEGCEQADAILFGSVGGPKWENLPPESQPERGALLPLRKHFKLFSNLRPAKLYQGLEAFCPLRADIAANGFDILCVRELTGGIYFGQPKGREGSGQYEKAFDTEVYHRFEIERIARIAFESARKRRRKVTSIDKANVLQSSILWREIVNDVAKTYPDVELAHMYIDNATMQLIKDPSQFDVLLCSNLFGDILSDECAMITGSMGMLPSASLNEQGFGLYEPAGGSAPDIAGKNIANPIAQILSLALLLRYSLDANDAATAIEQAINRALEEGVRTGDLARGAAAVSTDEMGDIIARYVAEGV.

78–91 (GPKWENLPPESQPE) contacts NAD(+). Positions 99, 109, 138, and 227 each coordinate substrate. Mg(2+) contacts are provided by Asp227, Asp251, and Asp255. 285 to 297 (GSAPDIAGKNIAN) is an NAD(+) binding site.

Belongs to the isocitrate and isopropylmalate dehydrogenases family. LeuB type 1 subfamily. Homodimer. It depends on Mg(2+) as a cofactor. The cofactor is Mn(2+).

It is found in the cytoplasm. It catalyses the reaction (2R,3S)-3-isopropylmalate + NAD(+) = 4-methyl-2-oxopentanoate + CO2 + NADH. It participates in amino-acid biosynthesis; L-leucine biosynthesis; L-leucine from 3-methyl-2-oxobutanoate: step 3/4. Catalyzes the oxidation of 3-carboxy-2-hydroxy-4-methylpentanoate (3-isopropylmalate) to 3-carboxy-4-methyl-2-oxopentanoate. The product decarboxylates to 4-methyl-2 oxopentanoate. This chain is 3-isopropylmalate dehydrogenase, found in Salmonella choleraesuis (strain SC-B67).